A 212-amino-acid polypeptide reads, in one-letter code: Ribonuclease P protein component 3 (212 aa).

It belongs to the eukaryotic/archaeal RNase P protein component 3 family. Consists of a catalytic RNA component and at least 5 protein subunits. Forms a heterotetrameric subcomplex with Rnp2. Reconstituted enzyme missing individual protein subunits is suboptimally active, showing each subunit contributes to optimization of activity.

The protein localises to the cytoplasm. The enzyme catalyses Endonucleolytic cleavage of RNA, removing 5'-extranucleotides from tRNA precursor.. In terms of biological role, part of ribonuclease P, a protein complex that generates mature tRNA molecules by cleaving their 5'-ends. Not absolutely essential for activity in vitro, however it strongly stimulates activity. Binds RNase P RNA. This chain is Ribonuclease P protein component 3, found in Pyrococcus horikoshii (strain ATCC 700860 / DSM 12428 / JCM 9974 / NBRC 100139 / OT-3).